The chain runs to 240 residues: DNA repair protein RecO (240 aa).

Belongs to the RecO family.

Involved in DNA repair and RecF pathway recombination. The chain is DNA repair protein RecO from Xanthomonas euvesicatoria pv. vesicatoria (strain 85-10) (Xanthomonas campestris pv. vesicatoria).